A 235-amino-acid chain; its full sequence is tRNA pseudouridine synthase B (235 aa).

Aspartate 45 serves as the catalytic Nucleophile.

Belongs to the pseudouridine synthase TruB family. Type 1 subfamily.

It carries out the reaction uridine(55) in tRNA = pseudouridine(55) in tRNA. Functionally, responsible for synthesis of pseudouridine from uracil-55 in the psi GC loop of transfer RNAs. The protein is tRNA pseudouridine synthase B of Chlamydia felis (strain Fe/C-56) (Chlamydophila felis).